The primary structure comprises 278 residues: Maltodextrin transport system permease protein MdxG (278 aa).

6 helical membrane passes run 12 to 32 (ICTY…LLIT), 74 to 94 (TLVI…LAGY), 108 to 128 (LIFF…AFYV), 131 to 151 (MLIG…GGGI), 183 to 203 (IFAS…ALWA), and 242 to 262 (VALF…LFFF). The ABC transmembrane type-1 domain maps to 71–263 (YSNTLVIALS…LPICVLFFFL (193 aa)).

Belongs to the binding-protein-dependent transport system permease family. MalFG subfamily. The complex is composed of two ATP-binding proteins (MsmX), two transmembrane proteins (MdxF and MdxG) and a solute-binding protein (MdxE).

The protein localises to the cell membrane. Functionally, part of the ABC transporter complex involved in maltodextrin import. Probably responsible for the translocation of the substrate across the membrane. This Bacillus subtilis (strain 168) protein is Maltodextrin transport system permease protein MdxG (mdxG).